Consider the following 969-residue polypeptide: Protein translocase subunit SecA (969 aa).

Residues Gln99, 117–121 (GEGKT), and Asp631 each bind ATP.

This sequence belongs to the SecA family. In terms of assembly, monomer and homodimer. Part of the essential Sec protein translocation apparatus which comprises SecA, SecYEG and auxiliary proteins SecDF. Other proteins may also be involved.

The protein resides in the cell inner membrane. Its subcellular location is the cytoplasm. It catalyses the reaction ATP + H2O + cellular proteinSide 1 = ADP + phosphate + cellular proteinSide 2.. Functionally, part of the Sec protein translocase complex. Interacts with the SecYEG preprotein conducting channel. Has a central role in coupling the hydrolysis of ATP to the transfer of proteins into and across the cell membrane, serving as an ATP-driven molecular motor driving the stepwise translocation of polypeptide chains across the membrane. This chain is Protein translocase subunit SecA, found in Chlamydia trachomatis serovar A (strain ATCC VR-571B / DSM 19440 / HAR-13).